A 142-amino-acid chain; its full sequence is Small ribosomal subunit protein bS6 (142 aa).

Positions 110-133 (NKKPSHAKEKHEKTEHTHSHHAEE) are enriched in basic and acidic residues. The interval 110–142 (NKKPSHAKEKHEKTEHTHSHHAEEAESVGSHSE) is disordered.

This sequence belongs to the bacterial ribosomal protein bS6 family.

Functionally, binds together with bS18 to 16S ribosomal RNA. The chain is Small ribosomal subunit protein bS6 from Helicobacter pylori (strain P12).